The primary structure comprises 505 residues: RNA-splicing ligase RtcB homolog (505 aa).

Asp-119, Cys-122, His-227, His-259, and His-353 together coordinate Mn(2+). 226–230 contacts GMP; it reads NHYAE. GMP contacts are provided by residues 353-354, 402-405, Ser-409, 428-431, and Lys-504; these read HN, GGSM, and HGAG. The active-site GMP-histidine intermediate is His-428.

It belongs to the RtcB family. As to quaternary structure, catalytic component of the tRNA-splicing ligase complex. Mn(2+) serves as cofactor.

The protein resides in the nucleus. It is found in the cytoplasm. It catalyses the reaction a 3'-end 3'-phospho-ribonucleotide-RNA + a 5'-end dephospho-ribonucleoside-RNA + GTP = a ribonucleotidyl-ribonucleotide-RNA + GMP + diphosphate. The catalysed reaction is a 3'-end 2',3'-cyclophospho-ribonucleotide-RNA + a 5'-end dephospho-ribonucleoside-RNA + GTP + H2O = a ribonucleotidyl-ribonucleotide-RNA + GMP + diphosphate + H(+). Its function is as follows. Catalytic subunit of the tRNA-splicing ligase complex that acts by directly joining spliced tRNA halves to mature-sized tRNAs. Required for the ligation of mRNAs and specifically, regulates xbp-1 mRNA splicing during the endoplasmic reticulum stress-induced unfolded protein response. Has a neuroprotective role in the age-dependent degeneration of dopamine neurons, which is mediated by xbp-1. The chain is RNA-splicing ligase RtcB homolog from Caenorhabditis elegans.